The sequence spans 417 residues: Serine--tRNA ligase (417 aa).

Position 226–228 (226–228 (TSE)) interacts with L-serine. Residues 257–259 (RRE) and V273 each bind ATP. E280 serves as a coordination point for L-serine. Residue 344-347 (ELTS) coordinates ATP. An L-serine-binding site is contributed by T379.

It belongs to the class-II aminoacyl-tRNA synthetase family. Type-1 seryl-tRNA synthetase subfamily. Homodimer. The tRNA molecule binds across the dimer.

The protein resides in the cytoplasm. The enzyme catalyses tRNA(Ser) + L-serine + ATP = L-seryl-tRNA(Ser) + AMP + diphosphate + H(+). It catalyses the reaction tRNA(Sec) + L-serine + ATP = L-seryl-tRNA(Sec) + AMP + diphosphate + H(+). It participates in aminoacyl-tRNA biosynthesis; selenocysteinyl-tRNA(Sec) biosynthesis; L-seryl-tRNA(Sec) from L-serine and tRNA(Sec): step 1/1. Its function is as follows. Catalyzes the attachment of serine to tRNA(Ser). Is also able to aminoacylate tRNA(Sec) with serine, to form the misacylated tRNA L-seryl-tRNA(Sec), which will be further converted into selenocysteinyl-tRNA(Sec). In Mycobacterium sp. (strain KMS), this protein is Serine--tRNA ligase.